A 614-amino-acid chain; its full sequence is DBH-like monooxygenase protein 1 homolog (614 aa).

The signal sequence occupies residues 1-22 (MSENKLFCAIVFLTSLFCSTCS). The Lumenal segment spans residues 23-593 (QGTRFVHSAA…CRKDSAIQCE (571 aa)). One can recognise a DOMON domain in the interval 37-150 (RRYNIKWGFD…STVRVIWAFH (114 aa)). Asn-116 is a glycosylation site (N-linked (GlcNAc...) asparagine). Residue Tyr-205 is part of the active site. 2 cysteine pairs are disulfide-bonded: Cys-207-Cys-259 and Cys-244-Cys-271. His-237 and His-238 together coordinate Cu cation. A glycan (N-linked (GlcNAc...) asparagine) is linked at Asn-249. His-309, His-391, and His-393 together coordinate Cu cation. Intrachain disulfides connect Cys-366/Cys-482, Cys-370/Cys-552, and Cys-445/Cys-467. Residue His-391 is part of the active site. Asn-454 carries an N-linked (GlcNAc...) asparagine glycan. Residue Met-466 coordinates Cu cation. A glycan (N-linked (GlcNAc...) asparagine) is linked at Asn-519. A helical membrane pass occupies residues 594-612 (HSLALLLTACLLLILQTCL).

It belongs to the copper type II ascorbate-dependent monooxygenase family. Requires Cu(2+) as cofactor.

The protein localises to the endoplasmic reticulum membrane. The protein is DBH-like monooxygenase protein 1 homolog (moxd1) of Danio rerio (Zebrafish).